A 364-amino-acid chain; its full sequence is Methylthioribose-1-phosphate isomerase (364 aa).

D254 (proton donor) is an active-site residue.

Belongs to the eIF-2B alpha/beta/delta subunits family. MtnA subfamily.

Its subcellular location is the cytoplasm. The protein localises to the nucleus. It carries out the reaction 5-(methylsulfanyl)-alpha-D-ribose 1-phosphate = 5-(methylsulfanyl)-D-ribulose 1-phosphate. It participates in amino-acid biosynthesis; L-methionine biosynthesis via salvage pathway; L-methionine from S-methyl-5-thio-alpha-D-ribose 1-phosphate: step 1/6. Its function is as follows. Catalyzes the interconversion of methylthioribose-1-phosphate (MTR-1-P) into methylthioribulose-1-phosphate (MTRu-1-P). The chain is Methylthioribose-1-phosphate isomerase from Drosophila melanogaster (Fruit fly).